The following is a 113-amino-acid chain: U11-theraphotoxin-Hhn1d (113 aa).

The signal sequence occupies residues 1-21 (MNTVRVTFLLVFVVAVSLGQA). The propeptide occupies 22 to 74 (DKDENRMEMKDKTEQGKSYLHFAENLLLQKLEDVEAKLLEKDSEKSINSRQKR). 3 disulfides stabilise this stretch: cysteine 75/cysteine 90, cysteine 82/cysteine 95, and cysteine 89/cysteine 110.

It belongs to the neurotoxin 14 (magi-1) family. 01 (HNTX-16) subfamily. As to expression, expressed by the venom gland.

The protein localises to the secreted. Functionally, probable ion channel inhibitor. This is U11-theraphotoxin-Hhn1d from Cyriopagopus hainanus (Chinese bird spider).